The sequence spans 222 residues: Protein-L-isoaspartate O-methyltransferase (222 aa).

Serine 73 is an active-site residue.

Belongs to the methyltransferase superfamily. L-isoaspartyl/D-aspartyl protein methyltransferase family.

The protein resides in the cytoplasm. The enzyme catalyses [protein]-L-isoaspartate + S-adenosyl-L-methionine = [protein]-L-isoaspartate alpha-methyl ester + S-adenosyl-L-homocysteine. In terms of biological role, catalyzes the methyl esterification of L-isoaspartyl residues in peptides and proteins that result from spontaneous decomposition of normal L-aspartyl and L-asparaginyl residues. It plays a role in the repair and/or degradation of damaged proteins. The sequence is that of Protein-L-isoaspartate O-methyltransferase from Chromobacterium violaceum (strain ATCC 12472 / DSM 30191 / JCM 1249 / CCUG 213 / NBRC 12614 / NCIMB 9131 / NCTC 9757 / MK).